Reading from the N-terminus, the 62-residue chain is Arabinogalactan protein 40 (62 aa).

A signal peptide spans 1–22 (MEMKNIFVALFISAVLVSSVSA). A 4-hydroxyproline mark is found at P28, P30, and P32. O-linked (Ara...) hydroxyproline glycosylation is found at P28, P30, and P32. S35 is lipidated: GPI-anchor amidated serine. A propeptide spans 36 to 62 (SASTVAFPVVGSIVAASLSAFLALLLQ) (removed in mature form).

Belongs to the AG-peptide AGP family. Contains 4-hydroxyproline; hydroxylated on Pro-28, Pro-30 and Pro-32. Post-translationally, O-glycosylated on hydroxyprolines; noncontiguous hydroxylproline residues are glycosylated with arabinogalactan.

It localises to the cell membrane. In terms of biological role, proteoglycan that seems to be implicated in diverse developmental roles such as differentiation, cell-cell recognition, embryogenesis and programmed cell death. The sequence is that of Arabinogalactan protein 40 from Arabidopsis thaliana (Mouse-ear cress).